The chain runs to 127 residues: MSLLKEFKEFAMRGNVMDLAVAVVMGVAFNKIVTALVDGIIMPCVGLLLGGINIAGLSFTVGDVQIKWGNFLQNVIDFIIVAFAIFVLIKLINLLQRKKANEPEPVTPEIQLLTEIRDLLARNSSKI.

A run of 3 helical transmembrane segments spans residues 9-29, 32-52, and 75-95; these read EFAMRGNVMDLAVAVVMGVAF, IVTALVDGIIMPCVGLLLGGI, and VIDFIIVAFAIFVLIKLINLL.

It belongs to the MscL family. In terms of assembly, homopentamer.

It localises to the cell inner membrane. Functionally, channel that opens in response to stretch forces in the membrane lipid bilayer. May participate in the regulation of osmotic pressure changes within the cell. This Legionella pneumophila subsp. pneumophila (strain Philadelphia 1 / ATCC 33152 / DSM 7513) protein is Large-conductance mechanosensitive channel.